Reading from the N-terminus, the 585-residue chain is MAGUK p55 subfamily member 3 (585 aa).

2 consecutive L27 domains span residues 6–60 (EDSG…ERQS) and 61–118 (PTPV…FDPV). Residues 137–218 (IVRLVKNKEP…SITLKIIPAT (82 aa)) form the PDZ domain. The 71-residue stretch at 226 to 296 (ESKVFMRALF…PSKQFQERRL (71 aa)) folds into the SH3 domain. A Phosphoserine modification is found at serine 307. The 186-residue stretch at 385–570 (SRLVVLIGSL…VCSQLRAVIE (186 aa)) folds into the Guanylate kinase-like domain. A disordered region spans residues 510–530 (KRKTPPVSPDSEDPATPLDEQ).

This sequence belongs to the MAGUK family. In terms of assembly, interacts with HTR2C; this interaction stabilizes the receptor at the plasma membrane and prevents the desensitization of the HTR2C receptor-mediated calcium response. Interacts with HTR2A. Interacts with HTR4. Interacts (via PDZ domain) with CADM1 (via C-terminus)Interacts (via PDZ domain) with CADM1; this interaction connects CADM1 with DLG1. Interacts (via Guanylate kinase-like domain) with PALS1. Interacts with DLG1 (via N-terminus); this interaction connects CADM1 with DLG1 and links CADM1 with the regulatory subunit of phosphoinositide-3-kinase (PI3K) by forming a multiprotein complex and participates in cell spreading.

The protein resides in the apical cell membrane. It localises to the cell membrane. The protein localises to the cell junction. Its subcellular location is the adherens junction. Functionally, participates in cell spreading through the phosphoinositide-3-kinase (PI3K) pathway by connecting CADM1 to DLG1 and the regulatory subunit of phosphoinositide-3-kinase (PI3K). Stabilizes HTR2C at the plasma membrane and prevents its desensitization. May participates in the maintenance of adherens junctions. This Rattus norvegicus (Rat) protein is MAGUK p55 subfamily member 3.